We begin with the raw amino-acid sequence, 403 residues long: Palmitoyltransferase ZDHHC23-A (403 aa).

Over 1 to 70 the chain is Cytoplasmic; the sequence is MKRERFKPPE…ADRLGVSCCT (70 aa). Residues 71-91 traverse the membrane as a helical segment; it reads VGPLRLELSVLPPMVLIPGLL. Residue arginine 92 is a topological domain, lumenal. Residues 93–113 traverse the membrane as a helical segment; sequence VAAINCLLGVIILTALPLLVL. At 114 to 125 the chain is on the cytoplasmic side; sequence WYYYMTHRRKRR. A helical transmembrane segment spans residues 126 to 146; sequence TLFFLSLALFSLAYMYYLFLT. At 147–153 the chain is on the lumenal side; it reads EIVPRGD. A helical transmembrane segment spans residues 154–174; that stretch reads VTHLQVVTATTGMMLTLISLV. The Cytoplasmic segment spans residues 175 to 268; sequence RTKQGPGFVK…NSCVGQANHR (94 aa). The 51-residue stretch at 225 to 275 folds into the DHHC domain; sequence KKCPVCQLVRPPRAGHCRICGACVLRMDHHCVWINSCVGQANHRQFILTLL. Cysteine 255 (S-palmitoyl cysteine intermediate) is an active-site residue. A helical membrane pass occupies residues 269–289; sequence QFILTLLLFLLTSFYGISLVL. At 290 to 319 the chain is on the lumenal side; it reads RSICPKQSLFTAMLYCPGVYNQYSTALCFT. Residues 320–340 traverse the membrane as a helical segment; sequence CVWYSVIITGGLLHLFILQII. The Cytoplasmic portion of the chain corresponds to 341-403; sequence NVSCNVTERE…GSSLNLTDMV (63 aa).

It belongs to the DHHC palmitoyltransferase family.

It localises to the golgi apparatus membrane. Its subcellular location is the golgi apparatus. It is found in the trans-Golgi network membrane. The enzyme catalyses L-cysteinyl-[protein] + hexadecanoyl-CoA = S-hexadecanoyl-L-cysteinyl-[protein] + CoA. Its function is as follows. Palmitoyltransferase that could catalyze the addition of palmitate onto various protein substrates and be involved in a variety of cellular processes. This Danio rerio (Zebrafish) protein is Palmitoyltransferase ZDHHC23-A (zdhhc23a).